Reading from the N-terminus, the 312-residue chain is Malate dehydrogenase (312 aa).

NAD(+) is bound by residues 7 to 13 and Asp-34; that span reads GAAGGIG. The substrate site is built by Arg-81 and Arg-87. Residues Asn-94 and 117–119 each bind NAD(+); that span reads ITN. The substrate site is built by Asn-119 and Arg-153. His-177 acts as the Proton acceptor in catalysis. Position 227 (Met-227) interacts with NAD(+).

The protein belongs to the LDH/MDH superfamily. MDH type 1 family. Homodimer.

It carries out the reaction (S)-malate + NAD(+) = oxaloacetate + NADH + H(+). In terms of biological role, catalyzes the reversible oxidation of malate to oxaloacetate. The polypeptide is Malate dehydrogenase (Salmonella gallinarum (strain 287/91 / NCTC 13346)).